We begin with the raw amino-acid sequence, 448 residues long: Solute carrier family 52, riboflavin transporter, member 3-A (448 aa).

Transmembrane regions (helical) follow at residues 11–31 (AFGLGSWVSINGLWVELPLIV), 40–60 (LPSYLTVIIQFANLGPLLVTL), and 73–93 (LAIYAVLSIGVVACILLAVFW). N94 is a glycosylation site (N-linked (GlcNAc...) asparagine). Helical transmembrane passes span 107–127 (AFFILTFFLALVDCTSSVTFL) and 138–158 (ITTYFIGEGLSGLVPGLVALA). N-linked (GlcNAc...) asparagine glycans are attached at residues N168, N171, N175, and N194. 6 helical membrane-spanning segments follow: residues 198–218 (EIFFSFLAVMTTISLGAFLIL), 280–300 (AFIYVMVLWVNSATNGLLPSV), 315–335 (LSAALSAVANPVACIIAMFFP), 339–359 (LVFLGILCLLGSTFGGYNMAM), 376–396 (AIIVLSWVFFTGLLSYVKVMV), and 407–427 (ALVWCGAAVQTGSLLGSIIMF).

Belongs to the riboflavin transporter family.

It localises to the cell membrane. It catalyses the reaction riboflavin(in) = riboflavin(out). Plasma membrane transporter mediating the uptake by cells of the water soluble vitamin B2/riboflavin that plays a key role in biochemical oxidation-reduction reactions of the carbohydrate, lipid, and amino acid metabolism. This Danio rerio (Zebrafish) protein is Solute carrier family 52, riboflavin transporter, member 3-A (slc52a3a).